Consider the following 486-residue polypeptide: Hexosaminidase D (486 aa).

Glu-149 acts as the Proton donor in catalysis.

Belongs to the glycosyl hydrolase 20 family. Homodimer; disulfide-linked. In terms of tissue distribution, expressed in synovial fibroblasts and synovial membranes.

The protein resides in the cytoplasm. It localises to the nucleus. It is found in the extracellular vesicle. The catalysed reaction is Hydrolysis of terminal non-reducing N-acetyl-D-hexosamine residues in N-acetyl-beta-D-hexosaminides.. With respect to regulation, inhibited by O-(2-acetamido-2-deoxy-D-glucopyranosylidene)amino N-phenylcarbamate (PUGNAc). Inhibited by galacto-NAG-thiazoline. In terms of biological role, has hexosaminidase activity. Responsible for the cleavage of the monosaccharides N-acetylglucosamine (GlcNAc) and N-acetylgalactosamine (GalNAc) from cellular substrates. Has a preference for galactosaminide over glucosaminide substrates. This chain is Hexosaminidase D, found in Homo sapiens (Human).